The sequence spans 394 residues: Peroxisomal membrane protein PEX25 (394 aa).

A compositionally biased stretch (polar residues) spans 1-25 (MSQFGTTDIVSGSETPPYSGASYQD). Residues 1 to 65 (MSQFGTTDIV…SRSDDEDSQA (65 aa)) are disordered. The Cytoplasmic segment spans residues 1 to 366 (MSQFGTTDIV…LNLKTPKGTY (366 aa)). Positions 51-65 (SHTESSRSDDEDSQA) are enriched in basic and acidic residues. A phosphoserine mark is found at Ser58, Ser63, and Ser289. Residues 367–383 (AVLSLGSGLTGLVKLWI) traverse the membrane as a helical segment. The Lumenal segment spans residues 384–394 (TTKRSLCSSKD).

As to quaternary structure, homooligomer. Interacts with PEX27 and PEX34.

The protein resides in the peroxisome membrane. Functionally, required for regulation of peroxisome size and maintenance. Has a role in the import of peroxisomal matrix proteins. Imports RHO1 into the peroxisome. Also promotes peroxisome division and biogenesis. The chain is Peroxisomal membrane protein PEX25 (PEX25) from Saccharomyces cerevisiae (strain ATCC 204508 / S288c) (Baker's yeast).